Reading from the N-terminus, the 222-residue chain is Thiopurine S-methyltransferase (222 aa).

S-adenosyl-L-methionine contacts are provided by tryptophan 10, leucine 45, glutamate 66, and arginine 124.

This sequence belongs to the class I-like SAM-binding methyltransferase superfamily. TPMT family.

The protein resides in the cytoplasm. It carries out the reaction S-adenosyl-L-methionine + a thiopurine = S-adenosyl-L-homocysteine + a thiopurine S-methylether.. The chain is Thiopurine S-methyltransferase from Methylococcus capsulatus (strain ATCC 33009 / NCIMB 11132 / Bath).